The following is a 466-amino-acid chain: Uronate isomerase (466 aa).

The protein belongs to the metallo-dependent hydrolases superfamily. Uronate isomerase family.

It catalyses the reaction D-glucuronate = D-fructuronate. The catalysed reaction is aldehydo-D-galacturonate = keto-D-tagaturonate. It functions in the pathway carbohydrate metabolism; pentose and glucuronate interconversion. This chain is Uronate isomerase, found in Streptococcus agalactiae serotype III (strain NEM316).